The primary structure comprises 21 residues: Peptide PGLa-R5 (21 aa).

L21 is modified (leucine amide).

Expressed by the skin glands.

The protein resides in the secreted. Its function is as follows. Antimicrobial peptide. The protein is Peptide PGLa-R5 of Xenopus ruwenzoriensis (Uganda clawed frog).